Reading from the N-terminus, the 595-residue chain is Inactive metallocarboxypeptidase ecm14 (595 aa).

A signal peptide spans 1-22 (MYRPDHVFVILCAVFFTGQVTA). Residues 23–178 (VPAGTGITHP…MIYESQYPSR (156 aa)) constitute a propeptide that is removed on maturation. The 322-residue stretch at 206–527 (NYQPFPVILQ…NSVLVLGHFL (322 aa)) folds into the Peptidase M14 domain. Positions 270 and 273 each coordinate Zn(2+). Substrate-binding positions include 270-273 (HARE), arginine 328, and 345-346 (DR). An intrachain disulfide couples cysteine 339 to cysteine 362. Residue asparagine 386 is glycosylated (N-linked (GlcNAc...) asparagine). Zn(2+) is bound at residue histidine 402. 403–404 (SY) lines the substrate pocket.

Belongs to the peptidase M14 family. It depends on Zn(2+) as a cofactor.

It localises to the vacuole. The protein localises to the secreted. In terms of biological role, inactive carboxypeptidase that may play a role in cell wall organization and biogenesis. In Talaromyces marneffei (strain ATCC 18224 / CBS 334.59 / QM 7333) (Penicillium marneffei), this protein is Inactive metallocarboxypeptidase ecm14 (ecm14).